The primary structure comprises 147 residues: Transcriptional regulator MraZ (147 aa).

SpoVT-AbrB domains follow at residues 5–52 (NHPT…PMEE) and 81–124 (GQVV…NAEH).

The protein belongs to the MraZ family. Forms oligomers.

The protein resides in the cytoplasm. The protein localises to the nucleoid. This chain is Transcriptional regulator MraZ, found in Koribacter versatilis (strain Ellin345).